A 272-amino-acid chain; its full sequence is Probable protein VP2 (272 aa).

Disordered stretches follow at residues 50–116 and 195–272; these read GGSR…DFAD and YSPA…SSSS. The span at 78 to 90 shows a compositional bias: pro residues; that stretch reads APDPPAGNQPPAL. Positions 94–108 are enriched in gly residues; it reads GDGGNESGAGGGESG. Residues 218–230 show a composition bias toward basic and acidic residues; that stretch reads SKRDNKENRDRGR. Over residues 231–246 the composition is skewed to basic residues; sequence AKARAKQKPKKRRRRA. Low complexity predominate over residues 249-272; sequence ESSSSSSSKSSFNSEEGSSASSSS.

Phosphorylated at C-terminal serines.

This Homo sapiens (Human) protein is Probable protein VP2.